A 484-amino-acid polypeptide reads, in one-letter code: Protein nucleotidyltransferase YdiU (484 aa).

ATP contacts are provided by glycine 81, glycine 83, arginine 84, lysine 103, aspartate 115, glycine 116, arginine 166, and arginine 173. Aspartate 244 functions as the Proton acceptor in the catalytic mechanism. Mg(2+) is bound by residues asparagine 245 and aspartate 254. Residue aspartate 254 coordinates ATP.

Belongs to the SELO family. Requires Mg(2+) as cofactor. It depends on Mn(2+) as a cofactor.

It catalyses the reaction L-seryl-[protein] + ATP = 3-O-(5'-adenylyl)-L-seryl-[protein] + diphosphate. It carries out the reaction L-threonyl-[protein] + ATP = 3-O-(5'-adenylyl)-L-threonyl-[protein] + diphosphate. The enzyme catalyses L-tyrosyl-[protein] + ATP = O-(5'-adenylyl)-L-tyrosyl-[protein] + diphosphate. The catalysed reaction is L-histidyl-[protein] + UTP = N(tele)-(5'-uridylyl)-L-histidyl-[protein] + diphosphate. It catalyses the reaction L-seryl-[protein] + UTP = O-(5'-uridylyl)-L-seryl-[protein] + diphosphate. It carries out the reaction L-tyrosyl-[protein] + UTP = O-(5'-uridylyl)-L-tyrosyl-[protein] + diphosphate. Its function is as follows. Nucleotidyltransferase involved in the post-translational modification of proteins. It can catalyze the addition of adenosine monophosphate (AMP) or uridine monophosphate (UMP) to a protein, resulting in modifications known as AMPylation and UMPylation. The polypeptide is Protein nucleotidyltransferase YdiU (Shewanella loihica (strain ATCC BAA-1088 / PV-4)).